The sequence spans 479 residues: Adenosylhomocysteinase (479 aa).

Thr66, Asp142, and Glu203 together coordinate substrate. Position 204–206 (204–206 (TTT)) interacts with NAD(+). Residues Lys233 and Asp237 each contribute to the substrate site. NAD(+)-binding positions include Asn238, 267 to 272 (GYGDVG), Glu290, Asn325, 346 to 348 (IGH), and Asn394.

This sequence belongs to the adenosylhomocysteinase family. NAD(+) serves as cofactor.

It is found in the cytoplasm. It catalyses the reaction S-adenosyl-L-homocysteine + H2O = L-homocysteine + adenosine. It functions in the pathway amino-acid biosynthesis; L-homocysteine biosynthesis; L-homocysteine from S-adenosyl-L-homocysteine: step 1/1. In terms of biological role, may play a key role in the regulation of the intracellular concentration of adenosylhomocysteine. This Oleidesulfovibrio alaskensis (strain ATCC BAA-1058 / DSM 17464 / G20) (Desulfovibrio alaskensis) protein is Adenosylhomocysteinase.